The chain runs to 312 residues: Malate dehydrogenase (312 aa).

NAD(+)-binding positions include 12-17 (GAGFTG) and Asp36. Substrate-binding residues include Arg87 and Arg93. Residues Asn100 and 123-125 (LTN) contribute to the NAD(+) site. Asn125 is a substrate binding site. A Phosphoserine modification is found at Ser149. Arg156 lines the substrate pocket. His180 (proton acceptor) is an active-site residue.

The protein belongs to the LDH/MDH superfamily. MDH type 3 family.

The enzyme catalyses (S)-malate + NAD(+) = oxaloacetate + NADH + H(+). Functionally, catalyzes the reversible oxidation of malate to oxaloacetate. In Bacillus pumilus (strain SAFR-032), this protein is Malate dehydrogenase.